Consider the following 464-residue polypeptide: Serine protease PepD (464 aa).

The interval 1-71 (MAKLARVVGL…TQYRQPYEAL (71 aa)) is disordered. Topologically, residues 1–100 (MAKLARVVGL…GMVRQRPRAG (100 aa)) are cytoplasmic. Low complexity predominate over residues 39 to 48 (QGQQQTYSQQ). A helical membrane pass occupies residues 101-121 (MLAIGAVTIAVVSAGIGGAAA). Residues 122-464 (SLVGFNRAPA…VQVTLGKAEQ (343 aa)) are Periplasmic-facing. Residues His197, Asp236, and Ser317 each act as charge relay system in the active site. Residues 368–449 (LISTGKASHA…TVALTFQDPS (82 aa)) form the PDZ domain.

Belongs to the peptidase S1C family. Homotrimer. Interacts with numerous proteins, including the 35 kDa antigen PspA.

The protein localises to the cell inner membrane. It is found in the secreted. It localises to the cell wall. It catalyses the reaction Acts on substrates that are at least partially unfolded. The cleavage site P1 residue is normally between a pair of hydrophobic residues, such as Val-|-Val.. Probably regulates its own activity by autocleavage, which removes the PDZ domain. Inhibited by the serine protease inhibitor diisopropylfluorophosphate (DFP). Inhibited by fluoroquinolone such as ciprofloxacin, moxifloxacin and ofloxacin and their analogs. Its function is as follows. Required for virulence. Acts both as a protease, which degrades and/or refolds damaged substrate targets, and as a chaperone. Plays an important role in the stress response network mediated through the two-component regulatory system MprAB and SigE signaling networks. May utilize its PDZ domain to recognize and process misfolded proteins at the cell membrane, leading to activation of the MprAB and SigE signaling pathways and subsequent establishment of a positive feedback loop that facilitates bacterial adaptation. Interacts with and potentially cleaves several proteins, including the 35 kDa antigen PspA. Proteolytic cleavage of PspA may help to maintain cell envelope homeostasis in Mycobacterium and regulate specific stress response pathways during periods of extracytoplasmic stress. In vitro, exhibits proteolytic activity against the artificial substrate beta-casein. This chain is Serine protease PepD, found in Mycobacterium tuberculosis (strain ATCC 25618 / H37Rv).